Here is a 590-residue protein sequence, read N- to C-terminus: MRLFAQLSWYFRREWRRYLGAVALLVIIAMLQLVPPKVVGIVVDGVTEQHFTTGQILMWIATMVLIAVVVYLLRYVWRVLLFGASYQLAVELREDYYRQLSRQHPEFYLRHRTGDLMARATNDVDRVVFAAGEGVLTLVDSLVMGCAVLIMMSTQISWQLTLFSLLPMPVMAIMIKRNGDALHERFKLAQAAFSSLNDRTQESLTSIRMIKAFGLEDRQSALFAADAEDTGKKNMRVARIDARFDPTIYIAIGMANLLAIGGGSWMVVQGSLTLGQLTSFMMYLGLMIWPMLALAWMFNIVERGSAAYSRIRAMLAEAPVVNDGSEPVPEGRGELDVNIHQFTYPQTDHPALENVNFALKPGQMLGICGPTGSGKSTLLSLIQRHFDVSEGDIRFHDIPLTKLQLDSWRSRLAVVSQTPFLFSDTVANNIALGCPNATQQEIEHVARLASVHDDILRLPQGYDTEVGERGVMLSGGQKQRISIARALLVNAEILILDDALSAVDGRTEHQILHNLRQWGQGRTVIISAHRLSALTEASEIIVMQHGHIAQRGNHDVLAQQSGWYRDMYRYQQLEAALDDAPENREEAVDA.

One can recognise an ABC transmembrane type-1 domain in the interval 18–303 (YLGAVALLVI…LAWMFNIVER (286 aa)). The next 6 membrane-spanning stretches (helical) occupy residues 23 to 43 (ALLV…GIVV), 53 to 73 (TGQI…VYLL), 134 to 154 (GVLT…MMST), 155 to 175 (QISW…AIMI), 248 to 268 (IYIA…WMVV), and 280 to 300 (FMMY…MFNI). An ABC transporter domain is found at 337–570 (VNIHQFTYPQ…SGWYRDMYRY (234 aa)). ATP is bound at residue 369–376 (GPTGSGKS).

It belongs to the ABC transporter superfamily. Drug exporter-2 (TC 3.A.1.117) family.

Its subcellular location is the cell inner membrane. It carries out the reaction ATP + H2O + xenobioticSide 1 = ADP + phosphate + xenobioticSide 2.. This Escherichia coli (strain K12) protein is Multidrug resistance-like ATP-binding protein MdlA (mdlA).